Consider the following 117-residue polypeptide: G antigen 13 (117 aa).

A disordered region spans residues 1-117 (MSWRGRSTYY…PEEGEKQSQC (117 aa)). Composition is skewed to acidic residues over residues 32 to 45 (FSDE…EEGE) and 87 to 96 (ECEDGPDGQE). Residues 103–117 (EEVKTPEEGEKQSQC) show a composition bias toward basic and acidic residues.

It belongs to the GAGE family.

This is G antigen 13 from Homo sapiens (Human).